The sequence spans 352 residues: Nicotinate-nucleotide--dimethylbenzimidazole phosphoribosyltransferase (352 aa).

The Proton acceptor role is filled by Glu-316.

This sequence belongs to the CobT family.

It carries out the reaction 5,6-dimethylbenzimidazole + nicotinate beta-D-ribonucleotide = alpha-ribazole 5'-phosphate + nicotinate + H(+). Its pathway is nucleoside biosynthesis; alpha-ribazole biosynthesis; alpha-ribazole from 5,6-dimethylbenzimidazole: step 1/2. Its function is as follows. Catalyzes the synthesis of alpha-ribazole-5'-phosphate from nicotinate mononucleotide (NAMN) and 5,6-dimethylbenzimidazole (DMB). The sequence is that of Nicotinate-nucleotide--dimethylbenzimidazole phosphoribosyltransferase from Ruminiclostridium cellulolyticum (strain ATCC 35319 / DSM 5812 / JCM 6584 / H10) (Clostridium cellulolyticum).